Reading from the N-terminus, the 86-residue chain is Large ribosomal subunit protein eL20 (86 aa).

The protein belongs to the eukaryotic ribosomal protein eL20 family. Part of the 50S ribosomal subunit. Binds 23S rRNA.

This Sulfolobus acidocaldarius (strain ATCC 33909 / DSM 639 / JCM 8929 / NBRC 15157 / NCIMB 11770) protein is Large ribosomal subunit protein eL20.